Consider the following 606-residue polypeptide: MQQDNRKKNNLEMEFFSDYGDANRFKVQEVIGKGSYGVVCSAIDTLTGEKVAIKKIHDIFEHISDAARILREIKLLRLLRHPDIVEIKHIMLPPSRREFKDIYVVFELMESDLHQVIKANDDLTREHYQFFLYQLLRALKYIHTANVYHRDLKPKNILANANCKLKICDFGLARVAFNDTPTTIFWTDYVATRWYRAPELCGSFYSKYTPAIDIWSIGCIFAEVLMGKPLFPGKNVVHQLDLMTDLLGTPSLDTISRVRNEKARRYLTSMRKKPPIPFAQKFPNADPLSLKLLERLLAFDPKDRPTAEEALADPYFKGLAKVEREPSCQPITKMEFEFERRKVTKEDIRELISREILEYHPQLLKDHMNGADKASFLYPSAVDQFRRQFAHLEENSGKTGPVAPLERKHASLPRSTVIHSTAVARGGQPKLMNNTNTLNPETTQNIPFNHATIQAQQRNLSAAKPSTFMGPVAPFDNGRISRDAYDPRSFIRSTNLPFSQQSAATVAMGKQQERRTTMEPEKQARQISQYNRYAPDVAINIDNNPFIMARTGMNKAENISDRIIIDTNLLQATAGIGVAAAAAAAAPGGSAHRKVGAVRYGMSKMY.

A Protein kinase domain is found at phenylalanine 25 to phenylalanine 316. ATP contacts are provided by residues isoleucine 31 to valine 39 and lysine 54. The active-site Proton acceptor is the aspartate 151. Threonine 187 is subject to Phosphothreonine. The short motif at threonine 187–tyrosine 189 is the TXY element. Tyrosine 189 carries the post-translational modification Phosphotyrosine. At threonine 192 the chain carries Phosphothreonine.

This sequence belongs to the protein kinase superfamily. CMGC Ser/Thr protein kinase family. MAP kinase subfamily. Dually phosphorylated on Thr-187 and Tyr-189, which activates the enzyme.

The enzyme catalyses L-seryl-[protein] + ATP = O-phospho-L-seryl-[protein] + ADP + H(+). It catalyses the reaction L-threonyl-[protein] + ATP = O-phospho-L-threonyl-[protein] + ADP + H(+). Its activity is regulated as follows. Activated by threonine and tyrosine phosphorylation. The sequence is that of Mitogen-activated protein kinase 20 (MPK20) from Arabidopsis thaliana (Mouse-ear cress).